Consider the following 322-residue polypeptide: MSGKPPAIFLMGPTAAGKTDLAIELTKVLPCELISVDSALVYRGMDIGSAKPSKEILAAHPHRLIDIRDPAESYSAAQFRADALEAMAEITARGKIPLLVGGTMLYYKALIDGLADMPADAAVRAELERQAEALGLAELHRQLAEVDPESAARIHPNDPQRLIRALEVYRVSGESMTAHRQRQFAESRGADAGAGGHLPYTVASLAIAPTDRHILHQRIALRFSQMLEQGFVDEVRSLRARSDLHAGLPSIRAVGYRQVWDYLDGKLTENEMRERGIIATRQLAKRQFTWLRGWPEVHWLDSLACDNLSRTLKYLGAISILS.

12-19 provides a ligand contact to ATP; that stretch reads GPTAAGKT. Residue 14-19 coordinates substrate; that stretch reads TAAGKT. Interaction with substrate tRNA regions lie at residues 37-40 and 160-164; these read DSAL and QRLIR.

It belongs to the IPP transferase family. In terms of assembly, monomer. Requires Mg(2+) as cofactor.

It carries out the reaction adenosine(37) in tRNA + dimethylallyl diphosphate = N(6)-dimethylallyladenosine(37) in tRNA + diphosphate. In terms of biological role, catalyzes the transfer of a dimethylallyl group onto the adenine at position 37 in tRNAs that read codons beginning with uridine, leading to the formation of N6-(dimethylallyl)adenosine (i(6)A). In Pseudomonas putida (Arthrobacter siderocapsulatus), this protein is tRNA dimethylallyltransferase.